The sequence spans 445 residues: MLRKGCCVELLLLLLAGELPLSGGCPRDCVCYPSPMTVSCQAHNFAAIPEGIPEDSERIFLQNNHITFLQQGHFSPAMVTLWIYSNNITFIAPNTFEGFVHLEELDLGDNRQLRTLAPETFQGLVKLHALYLYKCGLSSLPAGIFGGLHSLQYLYLQDNHIEYLQDDIFVDLVNLSHLFLHGNKLWSLGQGIFRGLVNLDRLLLHENQLQWVHHKAFHDLHRLTTLFLFNNSLTELQGDCLAPLVALEFLRLNGNAWDCGCRARSLWEWLRRFRGSSSVVPCATPELRQGQDLKSLRVEDFRNCTGPASPHQIKSHTLSTSDRAARKEHHPSHGASRDKGHPHGHLPGSRSGSKKPGKNCTSHRNRNQISKGSAGKELPELQDYAPDYQHKFSFDIMPTARPKRKGKCARRTPIRAPSGVQQASSGTALGVSLLAWILGLVVSLR.

The N-terminal stretch at 1–24 (MLRKGCCVELLLLLLAGELPLSGG) is a signal peptide. The LRRNT domain occupies 25-54 (CPRDCVCYPSPMTVSCQAHNFAAIPEGIPE). 8 LRR repeats span residues 55–76 (DSER…HFSP), 77–98 (AMVT…TFEG), 101–123 (HLEE…TFQG), 126–147 (KLHA…IFGG), 150–171 (SLQY…IFVD), 174–195 (NLSH…IFRG), 198–219 (NLDR…AFHD), and 222–243 (RLTT…CLAP). Residues 255–306 (NAWDCGCRARSLWEWLRRFRGSSSVVPCATPELRQGQDLKSLRVEDFRNCTG) form the LRRCT domain. 2 disordered regions span residues 304-380 (CTGP…ELPE) and 401-421 (RPKR…SGVQ). Basic residues-rich tracts occupy residues 352–366 (GSKK…HRNR) and 401–413 (RPKR…RRTP). The GPI-anchor amidated serine moiety is linked to residue Ser424. The helical transmembrane segment at 424 to 444 (SSGTALGVSLLAWILGLVVSL) threads the bilayer. A propeptide spans 425-445 (SGTALGVSLLAWILGLVVSLR) (removed in mature form).

It belongs to the Nogo receptor family. Identified in a complex that contains RTN4R, RTN4RL1 and NGFR; the interaction depends on the presence of chondroitin sulfate proteoglycans. Does not interact with MAG, OMG and RTN4. In terms of tissue distribution, detected in brain (at protein level). Expressed in various regions of the brain, including the cerebral cortex, hippocampus, striatum, thalamus and cerebellum.

The protein resides in the cell membrane. Its subcellular location is the membrane raft. It localises to the perikaryon. It is found in the cell projection. In terms of biological role, cell surface receptor. Plays a functionally redundant role in postnatal brain development and in regulating axon regeneration in the adult central nervous system. Contributes to normal axon migration across the brain midline and normal formation of the corpus callosum. Protects motoneurons against apoptosis; protection against apoptosis is probably mediated by MAG. Plays a role in inhibiting neurite outgrowth and axon regeneration via its binding to neuronal chondroitin sulfate proteoglycans. Binds heparin. Like other family members, plays a role in restricting the number dendritic spines and the number of synapses that are formed during brain development. Signaling mediates activation of Rho and downstream reorganization of the actin cytoskeleton. In Rattus norvegicus (Rat), this protein is Reticulon-4 receptor-like 1.